A 313-amino-acid polypeptide reads, in one-letter code: Protein FixB (313 aa).

255–283 serves as a coordination point for FAD; sequence LYLAVGISGQIQHMVGANASQTIFAINKD.

The protein belongs to the ETF alpha-subunit/FixB family. As to quaternary structure, heterodimer of FixA and FixB.

The protein operates within amine and polyamine metabolism; carnitine metabolism. In terms of biological role, required for anaerobic carnitine reduction. May bring reductant to CaiA. The chain is Protein FixB from Escherichia coli O1:K1 / APEC.